Reading from the N-terminus, the 484-residue chain is Phosphoenolpyruvate carboxylase (484 aa).

Belongs to the PEPCase type 2 family. Homotetramer. It depends on Mg(2+) as a cofactor.

The enzyme catalyses oxaloacetate + phosphate = phosphoenolpyruvate + hydrogencarbonate. Its function is as follows. Catalyzes the irreversible beta-carboxylation of phosphoenolpyruvate (PEP) to form oxaloacetate (OAA), a four-carbon dicarboxylic acid source for the tricarboxylic acid cycle. This chain is Phosphoenolpyruvate carboxylase, found in Methanospirillum hungatei JF-1 (strain ATCC 27890 / DSM 864 / NBRC 100397 / JF-1).